A 364-amino-acid chain; its full sequence is Serine/threonine-protein kinase ENV7 (364 aa).

S-palmitoyl cysteine attachment occurs at residues C13, C14, and C15. The Protein kinase domain maps to 30 to 364 (YRIQRLLGEG…LLNLLQDLDT (335 aa)). Residues 36 to 44 (LGEGGMSFV) and K69 each bind ATP. D215 serves as the catalytic Proton acceptor.

Belongs to the protein kinase superfamily. Ser/Thr protein kinase family.

The protein resides in the vacuole membrane. It carries out the reaction L-seryl-[protein] + ATP = O-phospho-L-seryl-[protein] + ADP + H(+). The catalysed reaction is L-threonyl-[protein] + ATP = O-phospho-L-threonyl-[protein] + ADP + H(+). Serine/threonine-protein kinase involved in vacuolar processing and morphology. The sequence is that of Serine/threonine-protein kinase ENV7 (ENV7) from Saccharomyces cerevisiae (strain ATCC 204508 / S288c) (Baker's yeast).